Consider the following 197-residue polypeptide: NADH-quinone oxidoreductase subunit C (197 aa).

It belongs to the complex I 30 kDa subunit family. NDH-1 is composed of 14 different subunits. Subunits NuoB, C, D, E, F, and G constitute the peripheral sector of the complex.

Its subcellular location is the cell inner membrane. The catalysed reaction is a quinone + NADH + 5 H(+)(in) = a quinol + NAD(+) + 4 H(+)(out). Its function is as follows. NDH-1 shuttles electrons from NADH, via FMN and iron-sulfur (Fe-S) centers, to quinones in the respiratory chain. The immediate electron acceptor for the enzyme in this species is believed to be ubiquinone. Couples the redox reaction to proton translocation (for every two electrons transferred, four hydrogen ions are translocated across the cytoplasmic membrane), and thus conserves the redox energy in a proton gradient. The chain is NADH-quinone oxidoreductase subunit C from Caulobacter vibrioides (strain ATCC 19089 / CIP 103742 / CB 15) (Caulobacter crescentus).